Here is a 297-residue protein sequence, read N- to C-terminus: Cbb3-type cytochrome c oxidase subunit CcoP (297 aa).

The Cytoplasmic segment spans residues 1-35 (MSKKPTTKKEVQTTGHSWDGIEELNTPLPRWWLWT). Residues 36–56 (FYATIVWGVAYSIAMPAWPIF) form a helical membrane-spanning segment. Topologically, residues 57–297 (ASGATPGILG…SYVHSLGGGQ (241 aa)) are periplasmic. Cytochrome c domains are found at residues 108–199 (YTRN…LKIS) and 206–294 (ARAT…HSLG). Residues cysteine 121, cysteine 124, histidine 125, methionine 174, cysteine 219, cysteine 222, histidine 223, and methionine 264 each coordinate heme c.

Belongs to the CcoP / FixP family. In terms of assembly, component of the cbb3-type cytochrome c oxidase at least composed of CcoN, CcoO, CcoQ and CcoP. Interacts with CcoH (via transmembrane domain). Requires heme c as cofactor.

The protein localises to the cell inner membrane. It functions in the pathway energy metabolism; oxidative phosphorylation. In terms of biological role, C-type cytochrome. Part of the cbb3-type cytochrome c oxidase complex. CcoP subunit is required for transferring electrons from donor cytochrome c via its heme groups to CcoO subunit. From there, electrons are shuttled to the catalytic binuclear center of CcoN subunit where oxygen reduction takes place. The complex also functions as a proton pump. The sequence is that of Cbb3-type cytochrome c oxidase subunit CcoP from Rhodobacter capsulatus (strain ATCC BAA-309 / NBRC 16581 / SB1003).